A 119-amino-acid chain; its full sequence is Protein TusC (119 aa).

Belongs to the DsrF/TusC family. In terms of assembly, heterohexamer, formed by a dimer of trimers. The hexameric TusBCD complex contains 2 copies each of TusB, TusC and TusD. The TusBCD complex interacts with TusE.

It localises to the cytoplasm. In terms of biological role, part of a sulfur-relay system required for 2-thiolation of 5-methylaminomethyl-2-thiouridine (mnm(5)s(2)U) at tRNA wobble positions. The chain is Protein TusC from Klebsiella pneumoniae subsp. pneumoniae (strain ATCC 700721 / MGH 78578).